The primary structure comprises 192 residues: MENRWQVMIVWQVDRMRINTWKSLVKYHMYVSKKANRWFYRHHYDSHHPKISSEVHIPLGEARLVVTTYWGLHTGEKEWHLGQGVSIEWRKRRYSTQVDPGLADQLIHMYYFDCFAESAIRKAILGHIVSPSCEYQAGHNKVGSLQYLALAALIAPKKIKPPLPSVRKLTEDRWNKPQKTKGRRGSHTMNGH.

Residues 14-17 (DRMR) form an interaction with host APOBEC3F; F1-box region. The tract at residues 40–44 (YRHHY) is interaction with host APOBEC3G; G-box. Positions 54-72 (EVHIPLGEARLVVTTYWGL) are interaction with host APOBEC3F and APOBEC3G; FG-box. Residues 74 to 79 (TGEKEW) form an interaction with host APOBEC3F; F2-box region. Residues 75–114 (GEKEWHLGQGVSIEWRKRRYSTQVDPGLADQLIHMYYFDC) are RNA-binding. Position 96 is a phosphothreonine; by host MAP4K1 (Thr96). Residues His108, Cys114, Cys133, and His139 each contribute to the Zn(2+) site. Positions 108 to 139 (HMYYFDCFAESAIRKAILGHIVSPSCEYQAGH) match the HCCH motif motif. Phosphoserine; by host is present on Ser144. The BC-box-like motif motif lies at 144–153 (SLQYLALAAL). The interval 151 to 164 (AALIAPKKIKPPLP) is multimerization. An SOCS box-like region spans residues 151 to 180 (AALIAPKKIKPPLPSVRKLTEDRWNKPQKT). Ser165 bears the Phosphoserine; by host MAP4K1 mark. The disordered stretch occupies residues 165–192 (SVRKLTEDRWNKPQKTKGRRGSHTMNGH). A membrane association region spans residues 171–172 (ED). Residues 176–186 (KPQKTKGRRGS) show a composition bias toward basic residues. Position 188 is a phosphothreonine; by host (Thr188).

It belongs to the primate lentivirus group Vif protein family. Homomultimer; in vitro and presumably in vivo. Interacts with viral RNA and Pr55Gag precursor; these interactions mediate Vif incorporation into the virion. Interacts with the viral reverse transcriptase. Forms cullin-5-RING E3 ubiquitin-protein ligase complex (ECS complex) by interacting with host CUL5, RBX2, elongin BC complex (ELOB and ELOC) and CBFB/CBF-beta. Within the ECS complex, Vif interacts directly with host CUL5, ELOC and APOBEC (APOBEC3F and APOBEC3G) substrates. The ECS complex also contains some single-stranded RNA (ssRNA) that acts as a glue that bridges Vif with APOBEC (APOBEC3F and APOBEC3G) substrates. Interacts with host UBCE7IP1 isoform 3/ZIN and possibly with SAT. Interacts with host tyrosine kinases HCK and FYN; these interactions may decrease level of phosphorylated APOBEC3G incorporation into virions. Interacts with host ABCE1; this interaction may play a role in protecting viral RNA from damage during viral assembly. Interacts with host MDM2; this interaction targets Vif for degradation by the proteasome. Processed in virion by the viral protease. In terms of processing, highly phosphorylated on serine and threonine residues. Post-translationally, polyubiquitinated and degraded by the proteasome in the presence of APOBEC3G.

The protein resides in the host cytoplasm. It localises to the host cell membrane. It is found in the virion. In terms of biological role, counteracts the innate antiviral activity of host APOBEC3F and APOBEC3G by promoting their ubiquitination and degradation. Acts as a substrate recognition component of an E3 ubiquitin-protein ligase complex: mechanistically, Vif hijacks a host cullin-5-RING E3 ubiquitin-protein ligase complex (ECS complex) and the transcription coactivator CBFB/CBF-beta to form an active E3 ubiquitin-protein ligase complex that targets APOBEC3G and APOBEC3F for polyubiquitination, leading to their degradation by the proteasome. Vif interaction with APOBEC3G also blocks its cytidine deaminase activity in a proteasome-independent manner, suggesting a dual inhibitory mechanism. May interact directly with APOBEC3G mRNA in order to inhibit its translation. Association with CBFB/CBF-beta also inhibits the transcription coactivator activity of CBFB/CBF-beta. Seems to play a role in viral morphology by affecting the stability of the viral nucleoprotein core. Finally, Vif also contributes to the G2 cell cycle arrest observed in HIV infected cells. The sequence is that of Virion infectivity factor from Human immunodeficiency virus type 1 group M subtype D (isolate NDK) (HIV-1).